Here is a 292-residue protein sequence, read N- to C-terminus: 4-hydroxy-tetrahydrodipicolinate synthase (292 aa).

Residue Thr-45 participates in pyruvate binding. The active-site Proton donor/acceptor is the Tyr-133. Lys-161 functions as the Schiff-base intermediate with substrate in the catalytic mechanism. Ile-203 is a pyruvate binding site.

The protein belongs to the DapA family. As to quaternary structure, homotetramer; dimer of dimers.

It localises to the cytoplasm. It catalyses the reaction L-aspartate 4-semialdehyde + pyruvate = (2S,4S)-4-hydroxy-2,3,4,5-tetrahydrodipicolinate + H2O + H(+). The protein operates within amino-acid biosynthesis; L-lysine biosynthesis via DAP pathway; (S)-tetrahydrodipicolinate from L-aspartate: step 3/4. In terms of biological role, catalyzes the condensation of (S)-aspartate-beta-semialdehyde [(S)-ASA] and pyruvate to 4-hydroxy-tetrahydrodipicolinate (HTPA). This chain is 4-hydroxy-tetrahydrodipicolinate synthase, found in Sodalis glossinidius (strain morsitans).